Reading from the N-terminus, the 184-residue chain is Lipoprotein signal peptidase (184 aa).

A run of 3 helical transmembrane segments spans residues 23 to 43 (FLYY…FQVF), 88 to 108 (PGLV…FLVF), and 110 to 130 (TSYN…GNFF). Catalysis depends on residues Asp142 and Asp157. Residues 156 to 176 (ADCCITFSFIGLFLSFLIQFF) traverse the membrane as a helical segment.

The protein belongs to the peptidase A8 family.

It is found in the cell membrane. It catalyses the reaction Release of signal peptides from bacterial membrane prolipoproteins. Hydrolyzes -Xaa-Yaa-Zaa-|-(S,diacylglyceryl)Cys-, in which Xaa is hydrophobic (preferably Leu), and Yaa (Ala or Ser) and Zaa (Gly or Ala) have small, neutral side chains.. It functions in the pathway protein modification; lipoprotein biosynthesis (signal peptide cleavage). Its function is as follows. This protein specifically catalyzes the removal of signal peptides from prolipoproteins. This Mycoplasma pneumoniae (strain ATCC 29342 / M129 / Subtype 1) (Mycoplasmoides pneumoniae) protein is Lipoprotein signal peptidase.